The sequence spans 1056 residues: PAX-interacting protein 1 (1056 aa).

2 BRCT domains span residues 8–93 and 94–183; these read VPEE…GFSP and ESCQ…FYHP. The segment at 94–183 is interaction with PAGR1; it reads ESCQIFFGLT…RRKDEAFYHP (90 aa). The span at 188 to 205 shows a compositional bias: acidic residues; the sequence is YEEEEEEEEEGDNEEQDS. Disordered regions lie at residues 188–276, 393–412, and 419–486; these read YEEE…QRRL, THVLQQHHPPQQPQQQHPAL, and MQLQ…FQQQ. Positions 214–223 are enriched in low complexity; sequence SSVASSAVAS. Phosphoserine occurs at positions 223 and 230. 3 stretches are compositionally biased toward low complexity: residues 396-412, 419-435, and 445-486; these read LQQHHPPQQPQQQHPAL, MQLQQQQQQQQQQQQQP, and QFPQ…FQQQ. Positions 577-1056 are interaction with TP53BP1; sequence QLFGHDPAVE…TLDYESYKFN (480 aa). 4 BRCT domains span residues 588–681, 688–776, 853–934, and 955–989; these read PEES…RALH, PGGK…VQYS, TPLV…NYIL, and HVSPLFKTKYFYITPGICPSLATMKAIVECAGGKV. The Nuclear localization signal signature appears at 655–672; sequence RKRCVTAHWLNTVLKKKK.

In terms of assembly, interacts with the C-terminal transactivation domain of PAX2. Forms a constitutive complex with PAGR1 independently of the MLL2/MLL3 complex. Interacts with TP53BP1 (when phosphorylated at the N-terminus by ATM). Interacts with HLTF. Component of the KMT2 family MLL2/MLL3 complex (also named ASCOM complex), at least composed of the HMTs KMT2D and/or KMT2C, the common subunits ASH2L, RBBP5, WDR5 and DPY30, and the complex type-specific subunits PAXIP1/PTIP, PAGR1, NCOA6 and KDM6A; required for the association of PAGR1 with the MLL2/MLL3 complex. Interacts with NUPR1; this interaction prevents PAXIP1 inhibition of PAX2 transcription factor activity. In terms of tissue distribution, expression detected in all tissues examined, including brain stem, cerebellum, cortex, heart, spleen, kidney, liver, thymus and lung.

The protein localises to the nucleus matrix. It localises to the chromosome. Involved in DNA damage response and in transcriptional regulation through histone methyltransferase (HMT) complexes such as the MLL2/MLL3 complex. Plays a role in early development. In DNA damage response is required for cell survival after ionizing radiation. In vitro shown to be involved in the homologous recombination mechanism for the repair of double-strand breaks (DSBs). Its localization to DNA damage foci requires Rnf8 and Ube2n. Recruits Tp53bp1 to DNA damage foci and, at least in particular repair processes, effective DNA damage response appears to require the association with Tp53bp1 phosphorylated by Atm. Together with Tp53bp1 regulates Atm association. Proposed to recruit Pagr1 to sites of DNA damage and the Pagr1:Paxip1 complex is required for cell survival in response to DNA damage independently of the MLL2/MLL3 complex. However, this function has been questioned. Promotes ubiquitination of PCNA following UV irradiation and may regulate recruitment of polymerase eta and Rad51 to chromatin after DNA damage. Proposed to be involved in transcriptional regulation by linking MLL-containing histone methyltransferase (HMT) complexes to gene promoters by interacting with promoter-bound transcription factors such as Pax2. Associates with gene promoters that are known to be regulated by Kmt2d/Mll2. During immunoglobulin class switching in activated B-cells is involved in trimethylation of histone H3 at 'Lys-4' and in transcription initiation of downstream switch regions at the immunoglobulin heavy-chain (Igh) locus; this function appears to involve the recruitment of MLL-containing HMT complexes. Conflictingly, its function in transcriptional regulation during immunoglobulin class switching is reported to be independent of the MLL2/MLL3 complex. In Mus musculus (Mouse), this protein is PAX-interacting protein 1 (Paxip1).